Consider the following 362-residue polypeptide: Meiotic recombination protein SPO11-1 (362 aa).

Positions 8–142 constitute a Topo IIA-type catalytic domain; that stretch reads SESTNLLQRI…LNVVSVGNGL (135 aa). Y103 functions as the O-(5'-phospho-DNA)-tyrosine intermediate in the catalytic mechanism. Residues E189 and D241 each coordinate Mg(2+).

The protein belongs to the TOP6A family. In terms of assembly, heterotetramer of 2 SPO11 (SPO11-1 and/or SPO11-2) and 2 MTOPVIB chains. Interacts with MTOPVIB. May form a heterodimer with SPO11-2. Interacts with PRD1. Does not interact with TOP6B. The cofactor is Mg(2+). In terms of tissue distribution, expressed in shoots, young seedlings, flowers and reproductive tissues. Not found in roots or rosette leaves.

It localises to the nucleus. It carries out the reaction ATP-dependent breakage, passage and rejoining of double-stranded DNA.. Component of a topoisomerase 6 complex specifically required for meiotic recombination. Together with MTOPVIB, mediates DNA cleavage that forms the double-strand breaks (DSB) that initiate meiotic recombination. The complex promotes relaxation of negative and positive supercoiled DNA and DNA decatenation through cleavage and ligation cycles. This Arabidopsis thaliana (Mouse-ear cress) protein is Meiotic recombination protein SPO11-1.